Consider the following 423-residue polypeptide: uncharacterized protein (423 aa).

Residues 75–145 form the BON domain; it reads LHVVVTQPIA…PIVNNIKVAG (71 aa).

Belongs to the bacterial secretin family.

Functionally, involved in the secretion of an unknown compound. This is an uncharacterized protein from Sinorhizobium fredii (strain NBRC 101917 / NGR234).